The chain runs to 314 residues: MAEKGVKQKGELKTARIPIKIVPVDTPLRKPEWIRVKAGNSAGRFGEIKSMLREKKLHTVCEEAACPNIGECFGRGTATFMILGDICTRRCPFCDVGHGQPLPPNPNEPAELADSVSSLKLQYVVITSVDRDDLRDGGAQHFVDVVRAVREASPKTTIETLVPDFRGRMDIAIDILGNGLPDVLNHNMETVPRLYKQARPGADYAHSLALMKQFKARYPDVKTKSGLMVGLGETDEEILEVMRDLRANDVEMLTIGQYLAPSGHHLPVSRYVHPDTFKMFEEEAKKMGFSGAACAPMVRSSYWADQQAHSAGVA.

[4Fe-4S] cluster is bound by residues cysteine 61, cysteine 66, cysteine 72, cysteine 87, cysteine 91, cysteine 94, and serine 301. The region spanning 73–290 is the Radical SAM core domain; sequence FGRGTATFMI…EEEAKKMGFS (218 aa).

It belongs to the radical SAM superfamily. Lipoyl synthase family. It depends on [4Fe-4S] cluster as a cofactor.

The protein localises to the cytoplasm. The enzyme catalyses [[Fe-S] cluster scaffold protein carrying a second [4Fe-4S](2+) cluster] + N(6)-octanoyl-L-lysyl-[protein] + 2 oxidized [2Fe-2S]-[ferredoxin] + 2 S-adenosyl-L-methionine + 4 H(+) = [[Fe-S] cluster scaffold protein] + N(6)-[(R)-dihydrolipoyl]-L-lysyl-[protein] + 4 Fe(3+) + 2 hydrogen sulfide + 2 5'-deoxyadenosine + 2 L-methionine + 2 reduced [2Fe-2S]-[ferredoxin]. It functions in the pathway protein modification; protein lipoylation via endogenous pathway; protein N(6)-(lipoyl)lysine from octanoyl-[acyl-carrier-protein]: step 2/2. Catalyzes the radical-mediated insertion of two sulfur atoms into the C-6 and C-8 positions of the octanoyl moiety bound to the lipoyl domains of lipoate-dependent enzymes, thereby converting the octanoylated domains into lipoylated derivatives. This chain is Lipoyl synthase, found in Dechloromonas aromatica (strain RCB).